Here is a 239-residue protein sequence, read N- to C-terminus: Purine nucleoside phosphorylase DeoD-type (239 aa).

An a purine D-ribonucleoside-binding site is contributed by H5. Phosphate contacts are provided by residues G21, R25, R44, and 88-91 (RVGS). A purine D-ribonucleoside-binding positions include 180 to 182 (EME) and 204 to 205 (SD). Residue D205 is the Proton donor of the active site.

This sequence belongs to the PNP/UDP phosphorylase family. In terms of assembly, homohexamer; trimer of homodimers.

It catalyses the reaction a purine D-ribonucleoside + phosphate = a purine nucleobase + alpha-D-ribose 1-phosphate. It carries out the reaction a purine 2'-deoxy-D-ribonucleoside + phosphate = a purine nucleobase + 2-deoxy-alpha-D-ribose 1-phosphate. In terms of biological role, catalyzes the reversible phosphorolytic breakdown of the N-glycosidic bond in the beta-(deoxy)ribonucleoside molecules, with the formation of the corresponding free purine bases and pentose-1-phosphate. The polypeptide is Purine nucleoside phosphorylase DeoD-type (Salmonella gallinarum (strain 287/91 / NCTC 13346)).